The sequence spans 127 residues: Fumarate reductase subunit C (127 aa).

The next 3 membrane-spanning stretches (helical) occupy residues 30–50 (ATIL…GSLV), 67–87 (IVVA…QTFF), and 107–127 (VVVL…LVIV).

The protein belongs to the FrdC family. As to quaternary structure, part of an enzyme complex containing four subunits: a flavoprotein (FrdA), an iron-sulfur protein (FrdB), and two hydrophobic anchor proteins (FrdC and FrdD).

It is found in the cell inner membrane. Anchors the catalytic components of the fumarate reductase complex to the cell membrane, binds quinones. The polypeptide is Fumarate reductase subunit C (Aliivibrio salmonicida (strain LFI1238) (Vibrio salmonicida (strain LFI1238))).